A 298-amino-acid polypeptide reads, in one-letter code: dTDP-4-dehydrorhamnose reductase (298 aa).

NADH is bound by residues G10–V12, D35–L36, and A59–T61. Residues Q11 to V12, D35 to L36, A59 to T61, and Y98 each bind NADPH. T100–D101 provides a ligand contact to dTDP-beta-L-rhamnose. Residues Y124 and K128 each coordinate NADH. Positions 124 and 128 each coordinate NADPH. Y124 (proton donor/acceptor) is an active-site residue. W149 contributes to the dTDP-beta-L-rhamnose binding site.

The protein belongs to the dTDP-4-dehydrorhamnose reductase family. In terms of assembly, homodimer. Requires Mg(2+) as cofactor.

It catalyses the reaction dTDP-beta-L-rhamnose + NADP(+) = dTDP-4-dehydro-beta-L-rhamnose + NADPH + H(+). The protein operates within carbohydrate biosynthesis; dTDP-L-rhamnose biosynthesis. Its pathway is bacterial outer membrane biogenesis; LPS O-antigen biosynthesis. In terms of biological role, involved in the biosynthesis of the dTDP-L-rhamnose which is an important component of lipopolysaccharide (LPS). Catalyzes the reduction of dTDP-6-deoxy-L-lyxo-4-hexulose to yield dTDP-L-rhamnose. In Burkholderia thailandensis (strain ATCC 700388 / DSM 13276 / CCUG 48851 / CIP 106301 / E264), this protein is dTDP-4-dehydrorhamnose reductase.